The sequence spans 121 residues: Fluoride-specific ion channel FluC 3 (121 aa).

4 helical membrane passes run 3–23 (VFLP…RYLL), 40–60 (FTIN…ALGG), 69–89 (VLAT…NEMV), and 101–121 (AAYL…GFLV). 2 residues coordinate Na(+): Gly76 and Ser79.

Belongs to the fluoride channel Fluc/FEX (TC 1.A.43) family.

It localises to the cell membrane. It carries out the reaction fluoride(in) = fluoride(out). Its activity is regulated as follows. Na(+) is not transported, but it plays an essential structural role and its presence is essential for fluoride channel function. Fluoride-specific ion channel. Important for reducing fluoride concentration in the cell, thus reducing its toxicity. The polypeptide is Fluoride-specific ion channel FluC 3 (Bifidobacterium longum (strain NCC 2705)).